Reading from the N-terminus, the 146-residue chain is Ribonuclease H (146 aa).

One can recognise an RNase H type-1 domain in the interval 1–138 (MYAWTDGACR…ADALANRGID (138 aa)). Mg(2+) is bound by residues Asp6, Glu44, Asp66, and Asp130.

This sequence belongs to the RNase H family. In terms of assembly, monomer. Mg(2+) serves as cofactor.

It localises to the cytoplasm. The catalysed reaction is Endonucleolytic cleavage to 5'-phosphomonoester.. In terms of biological role, endonuclease that specifically degrades the RNA of RNA-DNA hybrids. This is Ribonuclease H from Alkalilimnicola ehrlichii (strain ATCC BAA-1101 / DSM 17681 / MLHE-1).